The sequence spans 66 residues: Myrmicitoxin(1)-Pr5a (66 aa).

The first 25 residues, 1–25 (MRSLYLSFSLTIIFVLVIMHAEAKA), serve as a signal peptide directing secretion. A propeptide spanning residues 26-37 (ISEPNAIAEADP) is cleaved from the precursor. Valine 65 carries the valine amide modification.

This sequence belongs to the formicidae venom clade 3 family. Expressed by the venom gland.

The protein resides in the secreted. Its function is as follows. Toxin that causes a rapid and irreversible paralysis when intrathoracically injected into insects (blowflies). Does not cause spontaneous nocifensive behaviors by intraplantar injection in mice. Exhibits hemolytic and cytotoxic activities on HEK293 cells. This chain is Myrmicitoxin(1)-Pr5a, found in Pogonomyrmex rugosus (Desert harvester ant).